We begin with the raw amino-acid sequence, 476 residues long: Eukaryotic translation initiation factor 3 subunit L (476 aa).

One can recognise a PCI domain in the interval 257-452; that stretch reads DAIRMFSHIL…DLDYALENDL (196 aa).

The protein belongs to the eIF-3 subunit L family. Component of the eukaryotic translation initiation factor 3 (eIF-3) complex.

The protein localises to the cytoplasm. Functionally, component of the eukaryotic translation initiation factor 3 (eIF-3) complex, which is involved in protein synthesis of a specialized repertoire of mRNAs and, together with other initiation factors, stimulates binding of mRNA and methionyl-tRNAi to the 40S ribosome. The eIF-3 complex specifically targets and initiates translation of a subset of mRNAs involved in cell proliferation. This is Eukaryotic translation initiation factor 3 subunit L from Aspergillus clavatus (strain ATCC 1007 / CBS 513.65 / DSM 816 / NCTC 3887 / NRRL 1 / QM 1276 / 107).